Consider the following 453-residue polypeptide: Ras association domain-containing protein 10 (453 aa).

Positions 1 to 107 (MENEEWKVSV…VKFVLVRSEA (107 aa)) constitute a Ras-associating domain. The stretch at 262–295 (QKCDEVLLLQEQISRQEEAMEQMTVQIQEELNKR) forms a coiled coil. A compositionally biased stretch (basic and acidic residues) spans 299 to 310 (RRQEELSSKEQE). Disordered stretches follow at residues 299–322 (RRQE…DQGG) and 402–453 (GVTT…ESLV). 2 stretches are compositionally biased toward polar residues: residues 402–411 (GVTTTGSPTD) and 433–444 (TGLSSMHSQDSD).

It is found in the cytoplasm. It localises to the cytosol. The protein localises to the cytoskeleton. Its subcellular location is the microtubule organizing center. The protein resides in the centrosome. It is found in the spindle pole. May play role in regulating embryonic neurogenesis. The chain is Ras association domain-containing protein 10 (rassf10) from Xenopus laevis (African clawed frog).